The following is a 381-amino-acid chain: Spindlin interactor and repressor of chromatin-binding protein (381 aa).

K49 is covalently cross-linked (Glycyl lysine isopeptide (Lys-Gly) (interchain with G-Cter in SUMO2)). Phosphoserine occurs at positions 122 and 149. The segment covering 148-158 has biased composition (polar residues); sequence PSLPSLESGQD. Residues 148–170 form a disordered region; that stretch reads PSLPSLESGQDGQPDPISNPDPV. Residues K190 and K221 each participate in a glycyl lysine isopeptide (Lys-Gly) (interchain with G-Cter in SUMO2) cross-link. 3 disordered regions span residues 203 to 270, 285 to 320, and 335 to 381; these read PVTP…TDGS, LRTTDCKDSSKDSRAAEGLPQPQNPSSASPPGLRGT, and AVSL…GSGV. Over residues 219–229 the composition is skewed to basic and acidic residues; that stretch reads RWKESPENEPA. Residues S249 and S252 each carry the phosphoserine modification. Residues 288 to 299 are compositionally biased toward basic and acidic residues; that stretch reads TDCKDSSKDSRA. Residues K291 and K295 each participate in a glycyl lysine isopeptide (Lys-Gly) (interchain with G-Cter in SUMO2) cross-link. The span at 304–315 shows a compositional bias: low complexity; that stretch reads PQPQNPSSASPP. Phosphoserine is present on residues S310 and S313.

Interacts with SPIN1, SPIN2A, SPIN2B, SPIN3 and SPIN4. Interacts with TCF7L2 in a SPIN1-dependent manner. Interacts with PARP1; promoting PARP1 ADP-ribosyltransferase activity.

The protein localises to the nucleus. Its subcellular location is the chromosome. Its function is as follows. Chromatin protein that stabilizes SPIN1 and enhances its association with histone H3 trimethylated at both 'Lys-4' and 'Lys-9' (H3K4me3K9me3). Positively regulates poly-ADP-ribosylation in response to DNA damage; acts by facilitating PARP1 ADP-ribosyltransferase activity. The chain is Spindlin interactor and repressor of chromatin-binding protein from Mus musculus (Mouse).